A 577-amino-acid polypeptide reads, in one-letter code: Arginine--tRNA ligase (577 aa).

Positions 123–133 (PNLAKEMHVGH) match the 'HIGH' region motif.

Belongs to the class-I aminoacyl-tRNA synthetase family. In terms of assembly, monomer.

It is found in the cytoplasm. The enzyme catalyses tRNA(Arg) + L-arginine + ATP = L-arginyl-tRNA(Arg) + AMP + diphosphate. The sequence is that of Arginine--tRNA ligase from Marinomonas sp. (strain MWYL1).